A 223-amino-acid polypeptide reads, in one-letter code: Small ribosomal subunit protein uS11m (223 aa).

The N-terminal 38 residues, 1-38 (MVLKHSVTYNLSFFISFTFSSIFFSSLILFLVYKSVLS), are a transit peptide targeting the mitochondrion.

It belongs to the universal ribosomal protein uS11 family. In terms of assembly, component of the mitochondrial small ribosomal subunit (mt-SSU). Mature yeast 74S mitochondrial ribosomes consist of a small (37S) and a large (54S) subunit. The 37S small subunit contains a 15S ribosomal RNA (15S mt-rRNA) and at least 32 different proteins. The 54S large subunit contains a 21S rRNA (21S mt-rRNA) and at least 45 different proteins.

Its subcellular location is the mitochondrion. Its function is as follows. Component of the mitochondrial ribosome (mitoribosome), a dedicated translation machinery responsible for the synthesis of mitochondrial genome-encoded proteins, including at least some of the essential transmembrane subunits of the mitochondrial respiratory chain. The mitoribosomes are attached to the mitochondrial inner membrane and translation products are cotranslationally integrated into the membrane. The chain is Small ribosomal subunit protein uS11m (mrps18) from Schizosaccharomyces pombe (strain 972 / ATCC 24843) (Fission yeast).